The following is a 359-amino-acid chain: Peptide chain release factor 1 (359 aa).

Position 236 is an N5-methylglutamine (glutamine 236).

Belongs to the prokaryotic/mitochondrial release factor family. Methylated by PrmC. Methylation increases the termination efficiency of RF1.

Its subcellular location is the cytoplasm. Its function is as follows. Peptide chain release factor 1 directs the termination of translation in response to the peptide chain termination codons UAG and UAA. The polypeptide is Peptide chain release factor 1 (Streptococcus mutans serotype c (strain ATCC 700610 / UA159)).